The following is a 267-amino-acid chain: MSGKARASRKKPQQVKRSLKQRANKEADLPENEVGNTAKRNRSHAKHLSSKVTGQATYVHLKRVKISSSKRTTWQPLPKDTEEYLQSMMESVILGILFNIKRKEEIQCHLNQLKKRLLQQCATLKVPPRKLNYLKDVSKMLKMEKAQERANEESLASLQEEIDKIVETTESMTESIQSLKNKIQILTSEVEEEEQEVKQVFHIDSNKVLALPELSQKSLKAPILQEEILALIPNQNALLKDLDVLHDSAPVKNVSAFIEEAYKKLDS.

Basic residues-rich tracts occupy residues 1–22 and 39–49; these read MSGK…LKQR and KRNRSHAKHLS. Positions 1–54 are disordered; the sequence is MSGKARASRKKPQQVKRSLKQRANKEADLPENEVGNTAKRNRSHAKHLSSKVTG. S49 carries the phosphoserine modification. A coiled-coil region spans residues 100–202; sequence IKRKEEIQCH…EEQEVKQVFH (103 aa).

Belongs to the CENP-Q/OKP1 family. In terms of assembly, component of the CENPA-CAD complex, composed of CENPI, CENPK, CENPL, CENPO, CENPP, CENPQ, CENPR and CENPS. The CENPA-CAD complex interacts with the CENPA-NAC complex, at least composed of CENPA, CENPC, CENPH, CENPM, CENPN, CENPT and CENPU. Post-translationally, phosphorylation at Ser-49 is essential for CENPE recruitment to kinetochores and orderly chromosome congression.

It localises to the nucleus. The protein resides in the chromosome. It is found in the centromere. In terms of biological role, component of the CENPA-CAD (nucleosome distal) complex, a complex recruited to centromeres which is involved in assembly of kinetochore proteins, mitotic progression and chromosome segregation. May be involved in incorporation of newly synthesized CENPA into centromeres via its interaction with the CENPA-NAC complex. Plays an important role in chromosome congression and in the recruitment of CENP-O complex (which comprises CENPO, CENPP, CENPQ and CENPU), CENPE and PLK1 to the kinetochores. The polypeptide is Centromere protein Q (Cenpq) (Mus musculus (Mouse)).